The following is a 298-amino-acid chain: Mitochondrial distribution and morphology protein 12 (298 aa).

The region spanning 1-298 (MSIELDWTGL…VYPHFYTLYL (298 aa)) is the SMP-LTD domain. Residues 118-142 (SEHEESLSRWSDTESETGTCDSSSL) form a disordered region. The span at 133–142 (ETGTCDSSSL) shows a compositional bias: polar residues.

Belongs to the MDM12 family. In terms of assembly, component of the ER-mitochondria encounter structure (ERMES) or MDM complex, composed of MMM1, MDM10, MDM12 and MDM34. An MMM1 homodimer associates with one molecule of MDM12 on each side in a pairwise head-to-tail manner, and the SMP-LTD domains of MMM1 and MDM12 generate a continuous hydrophobic tunnel for phospholipid trafficking.

It localises to the mitochondrion outer membrane. The protein resides in the endoplasmic reticulum membrane. In terms of biological role, component of the ERMES/MDM complex, which serves as a molecular tether to connect the endoplasmic reticulum (ER) and mitochondria. Components of this complex are involved in the control of mitochondrial shape and protein biogenesis, and function in nonvesicular lipid trafficking between the ER and mitochondria. MDM12 is required for the interaction of the ER-resident membrane protein MMM1 and the outer mitochondrial membrane-resident beta-barrel protein MDM10. The MDM12-MMM1 subcomplex functions in the major beta-barrel assembly pathway that is responsible for biogenesis of all mitochondrial outer membrane beta-barrel proteins, and acts in a late step after the SAM complex. The MDM10-MDM12-MMM1 subcomplex further acts in the TOM40-specific pathway after the action of the MDM12-MMM1 complex. Essential for establishing and maintaining the structure of mitochondria and maintenance of mtDNA nucleoids. The sequence is that of Mitochondrial distribution and morphology protein 12 from Malassezia globosa (strain ATCC MYA-4612 / CBS 7966) (Dandruff-associated fungus).